The following is a 935-amino-acid chain: Isoleucine--tRNA ligase (935 aa).

The 'HIGH' region signature appears at 58-68 (PYANGSIHVGH). Residue glutamate 558 participates in L-isoleucyl-5'-AMP binding. Residues 599–603 (KMSKS) carry the 'KMSKS' region motif. Lysine 602 is a binding site for ATP. The Zn(2+) site is built by cysteine 897, cysteine 900, cysteine 917, and cysteine 920.

This sequence belongs to the class-I aminoacyl-tRNA synthetase family. IleS type 1 subfamily. In terms of assembly, monomer. Requires Zn(2+) as cofactor.

The protein resides in the cytoplasm. The enzyme catalyses tRNA(Ile) + L-isoleucine + ATP = L-isoleucyl-tRNA(Ile) + AMP + diphosphate. In terms of biological role, catalyzes the attachment of isoleucine to tRNA(Ile). As IleRS can inadvertently accommodate and process structurally similar amino acids such as valine, to avoid such errors it has two additional distinct tRNA(Ile)-dependent editing activities. One activity is designated as 'pretransfer' editing and involves the hydrolysis of activated Val-AMP. The other activity is designated 'posttransfer' editing and involves deacylation of mischarged Val-tRNA(Ile). This chain is Isoleucine--tRNA ligase, found in Francisella tularensis subsp. novicida (strain U112).